The following is a 149-amino-acid chain: D-aminoacyl-tRNA deacylase (149 aa).

Residues 137–138 carry the Gly-cisPro motif, important for rejection of L-amino acids motif; sequence GP.

Belongs to the DTD family. In terms of assembly, homodimer.

The protein resides in the cytoplasm. It catalyses the reaction glycyl-tRNA(Ala) + H2O = tRNA(Ala) + glycine + H(+). The enzyme catalyses a D-aminoacyl-tRNA + H2O = a tRNA + a D-alpha-amino acid + H(+). Functionally, an aminoacyl-tRNA editing enzyme that deacylates mischarged D-aminoacyl-tRNAs. Also deacylates mischarged glycyl-tRNA(Ala), protecting cells against glycine mischarging by AlaRS. Acts via tRNA-based rather than protein-based catalysis; rejects L-amino acids rather than detecting D-amino acids in the active site. By recycling D-aminoacyl-tRNA to D-amino acids and free tRNA molecules, this enzyme counteracts the toxicity associated with the formation of D-aminoacyl-tRNA entities in vivo and helps enforce protein L-homochirality. This is D-aminoacyl-tRNA deacylase from Clostridioides difficile (strain 630) (Peptoclostridium difficile).